A 426-amino-acid polypeptide reads, in one-letter code: Trophoblast glycoprotein (426 aa).

An N-terminal signal peptide occupies residues Met-1–Ala-31. At Ser-32 to Ser-361 the chain is on the extracellular side. Positions Pro-34–Ser-51 are enriched in low complexity. The tract at residues Pro-34–Ala-54 is disordered. The LRRNT domain occupies Ser-53–Pro-91. 2 cysteine pairs are disulfide-bonded: Cys-62–Cys-68 and Cys-66–Cys-77. 3 LRR repeats span residues Tyr-92–Arg-113, Pro-116–Glu-139, and Leu-141–Ala-163. The N-linked (GlcNAc...) asparagine glycan is linked to Asn-124. Asn-166 is a glycosylation site (N-linked (GlcNAc...) asparagine). LRR repeat units lie at residues Pro-172–Arg-210, Leu-215–Gln-238, Leu-239–Arg-261, and Asn-262–Asn-281. An N-linked (GlcNAc...) asparagine glycan is attached at Asn-281. The LRRCT domain maps to Gly-289–Ala-352. Disulfide bonds link Cys-304-Cys-329 and Cys-306-Cys-350. The chain crosses the membrane as a helical span at residues Tyr-362 to Leu-382. Residues Asn-383–Val-426 lie on the Cytoplasmic side of the membrane. Position 424 is a phosphoserine (Ser-424).

Post-translationally, highly glycosylated.

It is found in the cell membrane. Its function is as follows. May function as an inhibitor of Wnt/beta-catenin signaling by indirectly interacting with LRP6 and blocking Wnt3a-dependent LRP6 internalization. The chain is Trophoblast glycoprotein (Tpbg) from Rattus norvegicus (Rat).